Reading from the N-terminus, the 272-residue chain is Phosphoribosylformylglycinamidine synthase subunit PurQ (272 aa).

The Glutamine amidotransferase type-1 domain occupies Val-8–Glu-243. The Nucleophile role is filled by Cys-98. Residues His-225, Glu-227, and Glu-235 contribute to the active site.

As to quaternary structure, part of the FGAM synthase complex composed of 1 PurL, 1 PurQ and 2 PurS subunits.

It is found in the cytoplasm. It catalyses the reaction N(2)-formyl-N(1)-(5-phospho-beta-D-ribosyl)glycinamide + L-glutamine + ATP + H2O = 2-formamido-N(1)-(5-O-phospho-beta-D-ribosyl)acetamidine + L-glutamate + ADP + phosphate + H(+). The catalysed reaction is L-glutamine + H2O = L-glutamate + NH4(+). The protein operates within purine metabolism; IMP biosynthesis via de novo pathway; 5-amino-1-(5-phospho-D-ribosyl)imidazole from N(2)-formyl-N(1)-(5-phospho-D-ribosyl)glycinamide: step 1/2. In terms of biological role, part of the phosphoribosylformylglycinamidine synthase complex involved in the purines biosynthetic pathway. Catalyzes the ATP-dependent conversion of formylglycinamide ribonucleotide (FGAR) and glutamine to yield formylglycinamidine ribonucleotide (FGAM) and glutamate. The FGAM synthase complex is composed of three subunits. PurQ produces an ammonia molecule by converting glutamine to glutamate. PurL transfers the ammonia molecule to FGAR to form FGAM in an ATP-dependent manner. PurS interacts with PurQ and PurL and is thought to assist in the transfer of the ammonia molecule from PurQ to PurL. The polypeptide is Phosphoribosylformylglycinamidine synthase subunit PurQ (Methanococcus maripaludis (strain C7 / ATCC BAA-1331)).